A 541-amino-acid chain; its full sequence is Chaperonin GroEL 2 (541 aa).

Residues 30-33 (TLGP), K51, 87-91 (DGTTT), G414, and D495 contribute to the ATP site.

It belongs to the chaperonin (HSP60) family. As to quaternary structure, forms a cylinder of 14 subunits composed of two heptameric rings stacked back-to-back. Interacts with the co-chaperonin GroES.

The protein resides in the cytoplasm. The catalysed reaction is ATP + H2O + a folded polypeptide = ADP + phosphate + an unfolded polypeptide.. Functionally, together with its co-chaperonin GroES, plays an essential role in assisting protein folding. The GroEL-GroES system forms a nano-cage that allows encapsulation of the non-native substrate proteins and provides a physical environment optimized to promote and accelerate protein folding. This Cereibacter sphaeroides (Rhodobacter sphaeroides) protein is Chaperonin GroEL 2.